We begin with the raw amino-acid sequence, 442 residues long: 26S proteasome non-ATPase regulatory subunit 12 homolog B (442 aa).

Residues 1–129 adopt a coiled-coil conformation; that stretch reads MEESRQLESS…KEEQGLIAEA (129 aa). The PCI domain occupies 232-403; that stretch reads EICRSYKAIY…GIICFQIVKD (172 aa).

The protein belongs to the proteasome subunit p55 family. As to quaternary structure, component of the 19S regulatory particle (RP/PA700) lid subcomplex of the 26S proteasome. The 26S proteasome is composed of a core protease (CP), known as the 20S proteasome, capped at one or both ends by the 19S regulatory particle (RP/PA700). The RP/PA700 complex is composed of at least 17 different subunits in two subcomplexes, the base and the lid, which form the portions proximal and distal to the 20S proteolytic core, respectively. Ubiquitous with highest expression in flowers.

Its subcellular location is the cytoplasm. The protein resides in the nucleus. Its function is as follows. Acts as a regulatory subunit of the 26 proteasome which is involved in the ATP-dependent degradation of ubiquitinated proteins. Acts redundantly with RPN5A. The polypeptide is 26S proteasome non-ATPase regulatory subunit 12 homolog B (RPN5B) (Arabidopsis thaliana (Mouse-ear cress)).